Here is a 357-residue protein sequence, read N- to C-terminus: MFEAVEGMLAEHADLEQRLGAPETHADARLAKQLNQRYAALSSIIGAYRELQQLDDDIEAARELAQEDPAFAEEAAALTGRRQEVEERLRRLLVPRDAADDKDAILEVKSGEGGEESALFAGDLLRMYTRYAEARGWKVEVLDAAESDLGGYKSVTVAVKAKGTPEPGEAPYALLKFEGGVHRVQRVPVTESQGRVHTSAAGVLVLPEAEQVDVQIDENDLRIDVFRSSGPGGQSVNTTDSAVRITHLPTGIVVSCQNEKSQLQNREQAMRILRSRLLAAAQEKADAEAGEARRSQVRTVDRSERIRTYNFPENRISDHRTGYKAYNLDQVLDGDLQPVLDSCVEADLAARLEALEQ.

N5-methylglutamine is present on Q234.

The protein belongs to the prokaryotic/mitochondrial release factor family. In terms of processing, methylated by PrmC. Methylation increases the termination efficiency of RF1.

The protein localises to the cytoplasm. Its function is as follows. Peptide chain release factor 1 directs the termination of translation in response to the peptide chain termination codons UAG and UAA. In Nocardioides sp. (strain ATCC BAA-499 / JS614), this protein is Peptide chain release factor 1.